The primary structure comprises 236 residues: Transmembrane protein 65 (236 aa).

Residues 1 to 57 (MSRLLPLLRSRTARSLRPGPAAAAAPRPPSWCCCGRGLLALAAPGGPRALGTHPKKE) constitute a mitochondrion transit peptide. At 58-106 (PIEALNTAQGARDFIYSLHSSERSCLLKELHRFESIAIAQEKLEAQPPT) the chain is on the cytoplasmic side. A helical membrane pass occupies residues 107–127 (PGQLRYVFIHNAIPFIGFGFL). Residues 128-138 (DNAIMIVAGTH) are Extracellular-facing. Residues 139 to 161 (IELSIGIILGISTMAAAALGNLV) traverse the membrane as a helical segment. The Cytoplasmic portion of the chain corresponds to 162–205 (SDLAGLGLAGYVEALASRLGLSIPDLSPKQVDMWQTRVSSHLGK). The chain crosses the membrane as a helical span at residues 206-226 (AVGVTIGCILGMFPLIFFGGG). Residues 227 to 236 (EDDEKLEKKN) lie on the Extracellular side of the membrane.

In terms of assembly, monomer. Homodimer. Interacts with GJA1. Interacts weakly with DSP. Interacts with SCN1B.

It is found in the cell membrane. Its subcellular location is the mitochondrion inner membrane. Functionally, essential for maintaining proper cardiac intercalated disk (ICD) structure and function as well as cardiac conduction velocity in the heart. Its association with SCN1B is required for stabilizing the perinexus in the ICD and for localization of GJA1 and SCN5A to the ICD. May regulate the function of the gap junction protein GJA1 and may contribute to the stability and proper localization of GJA1 to cardiac intercalated disk thereby regulating gap junction communication. Regulates mitochondrial respiration and mitochondrial DNA copy number maintenance. In Bos taurus (Bovine), this protein is Transmembrane protein 65 (TMEM65).